We begin with the raw amino-acid sequence, 171 residues long: ATP synthase subunit b (171 aa).

A helical transmembrane segment spans residues 2–22; sequence VLVKMALGFLILLSPLCAMEL.

The protein belongs to the ATPase B chain family. F-type ATPases have 2 components, F(1) - the catalytic core - and F(0) - the membrane proton channel. F(1) has five subunits: alpha(3), beta(3), gamma(1), delta(1), epsilon(1). F(0) has three main subunits: a(1), b(2) and c(10-14). The alpha and beta chains form an alternating ring which encloses part of the gamma chain. F(1) is attached to F(0) by a central stalk formed by the gamma and epsilon chains, while a peripheral stalk is formed by the delta and b chains.

Its subcellular location is the cell inner membrane. F(1)F(0) ATP synthase produces ATP from ADP in the presence of a proton or sodium gradient. F-type ATPases consist of two structural domains, F(1) containing the extramembraneous catalytic core and F(0) containing the membrane proton channel, linked together by a central stalk and a peripheral stalk. During catalysis, ATP synthesis in the catalytic domain of F(1) is coupled via a rotary mechanism of the central stalk subunits to proton translocation. In terms of biological role, component of the F(0) channel, it forms part of the peripheral stalk, linking F(1) to F(0). This Helicobacter acinonychis (strain Sheeba) protein is ATP synthase subunit b.